Reading from the N-terminus, the 103-residue chain is Small ribosomal subunit protein uS10 (103 aa).

The protein belongs to the universal ribosomal protein uS10 family. Part of the 30S ribosomal subunit.

In terms of biological role, involved in the binding of tRNA to the ribosomes. This Acinetobacter baylyi (strain ATCC 33305 / BD413 / ADP1) protein is Small ribosomal subunit protein uS10.